The following is a 177-amino-acid chain: ATP synthase subunit delta (177 aa).

It belongs to the ATPase delta chain family. As to quaternary structure, F-type ATPases have 2 components, F(1) - the catalytic core - and F(0) - the membrane proton channel. F(1) has five subunits: alpha(3), beta(3), gamma(1), delta(1), epsilon(1). F(0) has three main subunits: a(1), b(2) and c(10-14). The alpha and beta chains form an alternating ring which encloses part of the gamma chain. F(1) is attached to F(0) by a central stalk formed by the gamma and epsilon chains, while a peripheral stalk is formed by the delta and b chains.

The protein localises to the cell inner membrane. F(1)F(0) ATP synthase produces ATP from ADP in the presence of a proton or sodium gradient. F-type ATPases consist of two structural domains, F(1) containing the extramembraneous catalytic core and F(0) containing the membrane proton channel, linked together by a central stalk and a peripheral stalk. During catalysis, ATP synthesis in the catalytic domain of F(1) is coupled via a rotary mechanism of the central stalk subunits to proton translocation. In terms of biological role, this protein is part of the stalk that links CF(0) to CF(1). It either transmits conformational changes from CF(0) to CF(1) or is implicated in proton conduction. This chain is ATP synthase subunit delta, found in Haemophilus influenzae (strain PittEE).